A 155-amino-acid chain; its full sequence is uncharacterized protein (155 aa).

A signal peptide spans 1 to 24 (MQQLSKRRLSALFVTAFLPVTAFA).

This is an uncharacterized protein from Chromohalobacter salexigens (strain ATCC BAA-138 / DSM 3043 / CIP 106854 / NCIMB 13768 / 1H11).